The chain runs to 104 residues: Ribonuclease P protein component 4 (104 aa).

Residues cysteine 63, cysteine 66, cysteine 89, and cysteine 92 each contribute to the Zn(2+) site.

The protein belongs to the eukaryotic/archaeal RNase P protein component 4 family. As to quaternary structure, consists of a catalytic RNA component and at least 4-5 protein subunits. Requires Zn(2+) as cofactor.

Its subcellular location is the cytoplasm. It catalyses the reaction Endonucleolytic cleavage of RNA, removing 5'-extranucleotides from tRNA precursor.. In terms of biological role, part of ribonuclease P, a protein complex that generates mature tRNA molecules by cleaving their 5'-ends. The sequence is that of Ribonuclease P protein component 4 from Methanoregula boonei (strain DSM 21154 / JCM 14090 / 6A8).